A 153-amino-acid polypeptide reads, in one-letter code: Large ribosomal subunit protein uL15 (153 aa).

The interval 1 to 49 is disordered; it reads MQLHNLYPFPEERKTRRRVGRGSGSGLGCTAGKGHKGQNARAGGGVAPG. Over residues 21–31 the composition is skewed to gly residues; it reads RGSGSGLGCTA.

This sequence belongs to the universal ribosomal protein uL15 family. As to quaternary structure, part of the 50S ribosomal subunit.

Functionally, binds to the 23S rRNA. This is Large ribosomal subunit protein uL15 from Desulfovibrio desulfuricans (strain ATCC 27774 / DSM 6949 / MB).